The primary structure comprises 510 residues: MVVFLFILYRQSDLKFKSMNGVIIVNTLKKRLFVATTMIWGLSVTLPVLAEYKPIEQPVEPANPSLKIESRNDLFKEKYPKQYQTWADTSKSTDLDSVNYEDPRVIVLWAGYAFAKDYKKPRGHFYAVTDVREILRTAAPMTPDAGPMPMACWSCKSPDVPRLIAERGEAGYFGATWASGGSEVVNPIGCADCHDTTSKDFAEGKPALRIARPYVLRALEKIDHKFDTSDRTDQRAALCANCHVEYYFAGDLKQVTFPWDNGITVDAMEKYYDDIGFVDWTHAVSKAPMLKAQHPDYETWMLGVHGKNGVTCIDCHMPKVQGADGKVYTDHQIGNPFNAFEHTCANCHDQSKEKLQAMVKSRKTEIKDVMLRLEDQLVAAHFEAKAAWEAGATKEEMKEALQDIRHAQWRWDYAAAGHGGHIHAPDVLLKVIGTGLDKSSDARTKLVRVLAKHGITDPVQLPDISTAENAWKATGVDIEKERKAKAEFLKTVVPQWDKEAREKGLLPAEK.

The N-terminal stretch at 1–50 is a signal peptide; sequence MVVFLFILYRQSDLKFKSMNGVIIVNTLKKRLFVATTMIWGLSVTLPVLA. His124 is a heme c binding site. Residues Cys152, Cys155, and Lys156 each contribute to the heme site. Residues Cys190, Cys193, His194, Cys239, Cys242, and His243 each contribute to the heme c site. Residues Glu245, Tyr246, Lys291, and Gln293 each contribute to the Ca(2+) site. Tyr246 is a substrate binding site. A substrate-binding site is contributed by His294. Heme c contacts are provided by His305, Cys312, Cys315, His316, His331, Cys344, Cys347, His348, and His423.

This sequence belongs to the cytochrome c-552 family. It depends on Ca(2+) as a cofactor. The cofactor is heme c.

The protein resides in the periplasm. It catalyses the reaction 6 Fe(III)-[cytochrome c] + NH4(+) + 2 H2O = 6 Fe(II)-[cytochrome c] + nitrite + 8 H(+). It functions in the pathway nitrogen metabolism; nitrate reduction (assimilation). Functionally, catalyzes the reduction of nitrite to ammonia, consuming six electrons in the process. This Pasteurella multocida (strain Pm70) protein is Cytochrome c-552.